The sequence spans 131 residues: Small ribosomal subunit protein uS8 (131 aa).

The protein belongs to the universal ribosomal protein uS8 family. Part of the 30S ribosomal subunit. Contacts proteins S5 and S12.

In terms of biological role, one of the primary rRNA binding proteins, it binds directly to 16S rRNA central domain where it helps coordinate assembly of the platform of the 30S subunit. This chain is Small ribosomal subunit protein uS8, found in Sorangium cellulosum (strain So ce56) (Polyangium cellulosum (strain So ce56)).